The sequence spans 409 residues: YNSGKLEESFVRGNLERECIEEKCSFEEAREVFENTEKTNEFWKQYVDGDQCEPNPCLNGGLCKDDINSYECWCQVGFEGKNCELDATCNIKNGRCKQFCKTGADSKVLCSCTTGYRLAPDQKSCKPAVPFPCGRVSVSHSPTTLTRAEIIFSNMDYENSTEVEPILDSLTESNQSSDDFIRIVGGENAKPGQFPWQVLLNGKIDAFCGGSIINEKWVVTAAHCIEPGVKITVVAGEYNTEETEPTEQRRNVIRAIPHHSYNATVNKYSHDIALLELDEPLTLNSYVTPICIADKEYTNIFLKFGSGYVSGWGRVFNRGRSATILQYLKVPLVDRATCLRSTKVTIYSNMFCAGFHEGGKDSCLGDSGGPHVTEVEGTSFLTGIISWGEECAVKGKYGIYTKVSRYVNW.

11 residues coordinate Ca(2+): Tyr-1, Asn-2, Glu-7, Glu-8, Glu-16, Glu-18, Glu-21, Glu-22, Glu-27, Glu-28, and Glu-31. The Gla domain maps to 1–47 (YNSGKLEESFVRGNLERECIEEKCSFEEAREVFENTEKTNEFWKQYV). 4-carboxyglutamate is present on residues Glu-7, Glu-8, Glu-16, Glu-18, Glu-21, Glu-22, Glu-27, Glu-28, Glu-31, Glu-34, Glu-37, and Glu-41. Glu-16 serves as a coordination point for Mg(2+). Cys-19 and Cys-24 form a disulfide bridge. Glu-21 serves as a coordination point for Mg(2+). Glu-27 contacts Mg(2+). Position 31 (Glu-31) interacts with Mg(2+). Ca(2+) is bound by residues Glu-37, Glu-41, Asp-48, Gly-49, and Gln-51. The Mg(2+) site is built by Glu-37 and Glu-41. Residues 48–84 (DGDQCEPNPCLNGGLCKDDINSYECWCQVGFEGKNCE) form the EGF-like 1; calcium-binding domain. Intrachain disulfides connect Cys-52/Cys-63, Cys-57/Cys-72, Cys-74/Cys-83, Cys-89/Cys-100, Cys-96/Cys-110, Cys-112/Cys-125, Cys-133/Cys-291, Cys-208/Cys-224, Cys-338/Cys-352, and Cys-363/Cys-391. Residues Asp-65 and Asp-66 each contribute to the Ca(2+) site. At Asp-65 the chain carries (3R)-3-hydroxyaspartate. Ser-69 carries the post-translational modification Phosphoserine. The 42-residue stretch at 85 to 126 (LDATCNIKNGRCKQFCKTGADSKVLCSCTTGYRLAPDQKSCK) folds into the EGF-like 2 domain. A propeptide spans 148–182 (AEIIFSNMDYENSTEVEPILDSLTESNQSSDDFIR) (activation peptide). Tyr-157 is subject to Sulfotyrosine. A Phosphoserine modification is found at Ser-160. Phosphothreonine; alternate is present on Thr-161. Thr-161 carries an O-linked (GalNAc...) threonine; alternate glycan. Residue Thr-171 is glycosylated (O-linked (GalNAc...) threonine). Asn-174 carries an N-linked (GlcNAc...) asparagine glycan. The region spanning 183-409 (IVGGENAKPG…YTKVSRYVNW (227 aa)) is the Peptidase S1 domain. Residue His-223 is the Charge relay system of the active site. Residues Glu-237, Asn-239, Glu-242, Glu-244, and Glu-247 each coordinate Ca(2+). N-linked (GlcNAc...) asparagine glycosylation occurs at Asn-262. The active-site Charge relay system is the Asp-271. Ser-367 acts as the Charge relay system in catalysis.

It belongs to the peptidase S1 family. In terms of assembly, heterodimer of a light chain and a heavy chain; disulfide-linked. Interacts (inactive and activated) with F11 (activated) in calcium-dependent manner. Interacts with SERPINC1. In terms of processing, activated by factor XIa, which excises the activation peptide. The propeptide can also be removed by snake venom protease. Activated by coagulation factor VIIa-tissue factor (F7-F3) complex in calcium-dependent manner. The iron and 2-oxoglutarate dependent 3-hydroxylation of aspartate and asparagine is (R) stereospecific within EGF domains.

Its subcellular location is the secreted. It carries out the reaction Selective cleavage of Arg-|-Ile bond in factor X to form factor Xa.. Factor IX is a vitamin K-dependent plasma protein that participates in the intrinsic pathway of blood coagulation by converting factor X to its active form in the presence of Ca(2+) ions, phospholipids, and factor VIIIa. The chain is Coagulation factor IX (F9) from Sus scrofa (Pig).